The primary structure comprises 541 residues: Zinc finger protein 655 (541 aa).

The disordered stretch occupies residues 1–22 (MEEVTSQEAAESPRGHFQPLEN). 6 consecutive C2H2-type zinc fingers follow at residues 243–265 (YKCD…QRIH), 271–293 (YKCK…KRIH), 334–356 (YKCG…QRTH), 361–383 (CKCT…QRLH), 411–433 (YSCN…QRIH), and 439–461 (HECN…HKMH). Residues 495-517 (FDCDAWEENFSQRAHLIQHERVH) form a C2H2-type 7; degenerate zinc finger.

The protein belongs to the krueppel C2H2-type zinc-finger protein family. Interacts with VAV1 and CDK4. Interacts with INTS13; promoting association with the integrator complex.

It is found in the nucleus. In terms of biological role, probable transcription factor. The polypeptide is Zinc finger protein 655 (Znf655) (Mus musculus (Mouse)).